The primary structure comprises 131 residues: Snaclec bitiscetin subunit alpha (131 aa).

3 disulfide bridges follow: cysteine 4–cysteine 15, cysteine 32–cysteine 125, and cysteine 100–cysteine 117. In terms of domain architecture, C-type lectin spans 11 to 126 (YKGHCYKVFK…CGEKNPFICK (116 aa)).

The protein belongs to the snaclec family. As to quaternary structure, heterodimer of subunits alpha and beta; disulfide-linked. As to expression, expressed by the venom gland.

It is found in the secreted. In terms of biological role, snaclec that binds to von Willebrand factor (VWF) and induces its interaction with GPIbalpha (GP1BA) (via the vWF A1 domain), resulting in platelet aggregation. The protein is Snaclec bitiscetin subunit alpha of Bitis arietans (African puff adder).